The following is a 182-amino-acid chain: ATP synthase subunit delta (182 aa).

This sequence belongs to the ATPase delta chain family. In terms of assembly, F-type ATPases have 2 components, F(1) - the catalytic core - and F(0) - the membrane proton channel. F(1) has five subunits: alpha(3), beta(3), gamma(1), delta(1), epsilon(1). CF(0) has four main subunits: a(1), b(1), b'(1) and c(10-14). The alpha and beta chains form an alternating ring which encloses part of the gamma chain. F(1) is attached to F(0) by a central stalk formed by the gamma and epsilon chains, while a peripheral stalk is formed by the delta, b and b' chains.

The protein localises to the cellular thylakoid membrane. Functionally, f(1)F(0) ATP synthase produces ATP from ADP in the presence of a proton or sodium gradient. F-type ATPases consist of two structural domains, F(1) containing the extramembraneous catalytic core and F(0) containing the membrane proton channel, linked together by a central stalk and a peripheral stalk. During catalysis, ATP synthesis in the catalytic domain of F(1) is coupled via a rotary mechanism of the central stalk subunits to proton translocation. In terms of biological role, this protein is part of the stalk that links CF(0) to CF(1). It either transmits conformational changes from CF(0) to CF(1) or is implicated in proton conduction. This chain is ATP synthase subunit delta, found in Synechococcus sp. (strain JA-3-3Ab) (Cyanobacteria bacterium Yellowstone A-Prime).